Here is a 209-residue protein sequence, read N- to C-terminus: Large ribosomal subunit protein bL25 (209 aa).

This sequence belongs to the bacterial ribosomal protein bL25 family. CTC subfamily. In terms of assembly, part of the 50S ribosomal subunit; part of the 5S rRNA/L5/L18/L25 subcomplex. Contacts the 5S rRNA. Binds to the 5S rRNA independently of L5 and L18.

Functionally, this is one of the proteins that binds to the 5S RNA in the ribosome where it forms part of the central protuberance. This chain is Large ribosomal subunit protein bL25, found in Xanthomonas campestris pv. campestris (strain 8004).